We begin with the raw amino-acid sequence, 36 residues long: Potassium channel toxin alpha-KTx 16.1 (36 aa).

3 disulfide bridges follow: Cys-7–Cys-28, Cys-13–Cys-33, and Cys-17–Cys-35.

Belongs to the short scorpion toxin superfamily. Potassium channel inhibitor family. Alpha-KTx 16 subfamily. Expressed by the venom gland.

Its subcellular location is the secreted. Functionally, blocks calcium-activated potassium channels. This Hottentotta tamulus (Eastern Indian scorpion) protein is Potassium channel toxin alpha-KTx 16.1.